The primary structure comprises 1235 residues: ATP-dependent helicase/nuclease subunit A (1235 aa).

One can recognise a UvrD-like helicase ATP-binding domain in the interval 3-471; sequence TKWTETQKSA…IKLSENFRSR (469 aa). 24–31 contacts ATP; it reads AGAGTGKT. A UvrD-like helicase C-terminal domain is found at 509 to 808; the sequence is PFEGNCGGDV…RIMSIHKSKG (300 aa).

Belongs to the helicase family. AddA subfamily. In terms of assembly, heterodimer of AddA and AddB/RexB. Mg(2+) is required as a cofactor.

It carries out the reaction Couples ATP hydrolysis with the unwinding of duplex DNA by translocating in the 3'-5' direction.. It catalyses the reaction ATP + H2O = ADP + phosphate + H(+). Functionally, the heterodimer acts as both an ATP-dependent DNA helicase and an ATP-dependent, dual-direction single-stranded exonuclease. Recognizes the chi site generating a DNA molecule suitable for the initiation of homologous recombination. The AddA nuclease domain is required for chi fragment generation; this subunit has the helicase and 3' -&gt; 5' nuclease activities. The protein is ATP-dependent helicase/nuclease subunit A of Clostridium kluyveri (strain ATCC 8527 / DSM 555 / NBRC 12016 / NCIMB 10680 / K1).